The following is a 794-amino-acid chain: cAMP and cAMP-inhibited cGMP 3',5'-cyclic phosphodiesterase 10A (794 aa).

Residues 296–297 (RC), 340–341 (IA), threonine 374, glutamine 393, and histidine 525 contribute to the 3',5'-cyclic AMP site. The 318-residue stretch at 452–769 (TSEEWQGLMH…NQWEKVIRGE (318 aa)) folds into the PDEase domain. The active-site Proton donor is the histidine 525. Histidine 525 contributes to the 3',5'-cyclic GMP binding site. Residues histidine 529, histidine 563, aspartate 564, and aspartate 674 each coordinate a divalent metal cation. Glutamine 726 provides a ligand contact to 3',5'-cyclic AMP. Glutamine 726 is a 3',5'-cyclic GMP binding site.

Belongs to the cyclic nucleotide phosphodiesterase family. In terms of assembly, homodimer. Requires a divalent metal cation as cofactor. In terms of tissue distribution, detected in striatum and testis (at protein level). Detected in whole brain, hippocampus, olfactory bulb, striatum neurons and testis.

Its subcellular location is the cytoplasm. It localises to the cytosol. It carries out the reaction a nucleoside 3',5'-cyclic phosphate + H2O = a nucleoside 5'-phosphate + H(+). The enzyme catalyses 3',5'-cyclic AMP + H2O = AMP + H(+). The catalysed reaction is 3',5'-cyclic GMP + H2O = GMP + H(+). The protein operates within purine metabolism; 3',5'-cyclic AMP degradation; AMP from 3',5'-cyclic AMP: step 1/1. Its pathway is purine metabolism; 3',5'-cyclic GMP degradation; GMP from 3',5'-cyclic GMP: step 1/1. With respect to regulation, inhibited by dipyridamole and moderately by IBMX, zaprinast and rolipram. Plays a role in signal transduction by regulating the intracellular concentration of cyclic nucleotides. Can hydrolyze both cAMP and cGMP, but has higher affinity for cAMP and is more efficient with cAMP as substrate. The polypeptide is cAMP and cAMP-inhibited cGMP 3',5'-cyclic phosphodiesterase 10A (Pde10a) (Rattus norvegicus (Rat)).